Reading from the N-terminus, the 871-residue chain is Protein translocase subunit SecA (871 aa).

Residues glutamine 80, 98-102 (GEGKT), and aspartate 537 contribute to the ATP site. Positions 852–871 (MEKGKKKGGSHGLGKIRVKR) are disordered. Residues 855-871 (GKKKGGSHGLGKIRVKR) are compositionally biased toward basic residues.

This sequence belongs to the SecA family. In terms of assembly, monomer and homodimer. Part of the essential Sec protein translocation apparatus which comprises SecA, SecYEG and auxiliary proteins SecDF. Other proteins may also be involved.

The protein resides in the cell inner membrane. It localises to the cytoplasm. The enzyme catalyses ATP + H2O + cellular proteinSide 1 = ADP + phosphate + cellular proteinSide 2.. In terms of biological role, part of the Sec protein translocase complex. Interacts with the SecYEG preprotein conducting channel. Has a central role in coupling the hydrolysis of ATP to the transfer of proteins into and across the cell membrane, serving as an ATP-driven molecular motor driving the stepwise translocation of polypeptide chains across the membrane. This Thermotoga neapolitana (strain ATCC 49049 / DSM 4359 / NBRC 107923 / NS-E) protein is Protein translocase subunit SecA.